The chain runs to 151 residues: Regulatory protein RecX (151 aa).

The protein belongs to the RecX family.

It is found in the cytoplasm. Its function is as follows. Modulates RecA activity. This is Regulatory protein RecX from Actinobacillus pleuropneumoniae serotype 5b (strain L20).